Consider the following 1972-residue polypeptide: TP53-binding protein 1 (1972 aa).

Disordered regions lie at residues 24–273 (DSQP…VAAM), 290–332 (QIQK…CSLA), and 346–507 (GQRS…LGLS). S25 and S63 each carry phosphoserine. Over residues 82-91 (EHLKENKVAD) the composition is skewed to basic and acidic residues. Over residues 94–121 (DSSNLDTCGSISQVIEQLPQPNRTSSVL) the composition is skewed to polar residues. 2 positions are modified to phosphoserine: S105 and S124. Over residues 138-149 (ELEQKEKEKEED) the composition is skewed to basic and acidic residues. The span at 151-168 (SGNTTHSLGAEDTASSQL) shows a compositional bias: polar residues. S166, S176, and S178 each carry phosphoserine. Residues 195-205 (LQSVTTNSGYT) show a composition bias toward polar residues. K217 participates in a covalent cross-link: Glycyl lysine isopeptide (Lys-Gly) (interchain with G-Cter in SUMO1); alternate. A Glycyl lysine isopeptide (Lys-Gly) (interchain with G-Cter in SUMO2); alternate cross-link involves residue K217. 3 positions are modified to phosphoserine: S222, S265, and S294. Composition is skewed to polar residues over residues 300-322 (LSTQ…CSTP) and 346-361 (GQRS…NSSD). Phosphothreonine is present on T302. Phosphoserine is present on residues S366, S380, S395, S398, S429, S452, and S464. Over residues 426–441 (STVSPQASTPISQSTP) the composition is skewed to polar residues. Over residues 442-452 (VFPPGSLPIPS) the composition is skewed to pro residues. Positions 481–490 (HSSSLTVECS) are enriched in polar residues. A compositionally biased stretch (basic and acidic residues) spans 491-501 (KTSEIEPKNSP). S500, S507, S518, S523, and S525 each carry phosphoserine. Positions 520-531 (SEYSQSPKMESL) are enriched in polar residues. The interval 520 to 556 (SEYSQSPKMESLSSHRIDEDGENTQIEDTEPMSPVLN) is disordered. The span at 538-549 (EDGENTQIEDTE) shows a compositional bias: acidic residues. A phosphothreonine mark is found at T543 and T548. Phosphoserine is present on residues S552, S566, and S580. The tract at residues 568–595 (LMNPAQDGEVQLSQNDDKTKGDDTDTRD) is disordered. Residues 582–595 (NDDKTKGDDTDTRD) are compositionally biased toward basic and acidic residues. S630, S635, S639, and S640 each carry phosphoserine. Positions 649 to 687 (EIKEHHPEEGSSGSEVEEIPETPCESQGEELKEENMESV) are disordered. T670 is subject to Phosphothreonine. A phosphoserine mark is found at S692, S724, S727, S771, S809, S830, S831, and S834. Positions 742–911 (EQEAWEEATS…TPFHFTLPKE (170 aa)) are disordered. Over residues 798-816 (AENRLDTKEEKSVEYEGDL) the composition is skewed to basic and acidic residues. The span at 839 to 848 (RADDPLRLDQ) shows a compositional bias: basic and acidic residues. Residues 849–864 (ELQQPQTQEKTSNSLT) are compositionally biased toward polar residues. T855 is subject to Phosphothreonine. A Glycyl lysine isopeptide (Lys-Gly) (interchain with G-Cter in SUMO1); alternate cross-link involves residue K868. K868 participates in a covalent cross-link: Glycyl lysine isopeptide (Lys-Gly) (interchain with G-Cter in SUMO2); alternate. Positions 890–902 (HASQSFCESSSET) are enriched in polar residues. At T922 the chain carries Phosphothreonine. K930 participates in a covalent cross-link: Glycyl lysine isopeptide (Lys-Gly) (interchain with G-Cter in SUMO2). S970 and S975 each carry phosphoserine. K984 is covalently cross-linked (Glycyl lysine isopeptide (Lys-Gly) (interchain with G-Cter in SUMO2)). Disordered stretches follow at residues 997–1028 (EASE…SVAS) and 1045–1103 (ENEA…VSPA). Positions 1018–1028 (GSTAVAESVAS) are enriched in polar residues. S1028 carries the post-translational modification Phosphoserine. T1056 bears the Phosphothreonine mark. Residue S1068 is modified to Phosphoserine. Residues 1071–1083 (EEEKEKLEGDHTI) are compositionally biased toward basic and acidic residues. A phosphoserine mark is found at S1086, S1094, S1101, and S1114. Basic and acidic residues predominate over residues 1127-1139 (DQKEGRSTNKENP). Disordered regions lie at residues 1127–1148 (DQKE…ERPS), 1188–1232 (NFGK…QPPH), and 1269–1478 (VTEE…DGLD). Phosphoserine is present on S1148. Positions 1188–1200 (NFGKQDATVQTER) are enriched in polar residues. The residue at position 1214 (T1214) is a Phosphothreonine. Residues S1216 and S1219 each carry the phosphoserine modification. Over residues 1272-1285 (ETEEPIVECQECET) the composition is skewed to acidic residues. Composition is skewed to low complexity over residues 1298 to 1307 (DLGDISSFSS) and 1316 to 1329 (SSGT…SSGS). Phosphoserine is present on residues S1317 and S1342. Omega-N-methylarginine is present on R1355. Position 1362 is a phosphoserine (S1362). K1365 participates in a covalent cross-link: Glycyl lysine isopeptide (Lys-Gly) (interchain with G-Cter in SUMO2). S1368 bears the Phosphoserine mark. A Phosphothreonine modification is found at T1372. Residues 1396–1403 (RGRGRRGR) carry the GAR motif. Residues S1426 and S1430 each carry the phosphoserine modification. Residue K1434 forms a Glycyl lysine isopeptide (Lys-Gly) (interchain with G-Cter in SUMO1); alternate linkage. K1434 participates in a covalent cross-link: Glycyl lysine isopeptide (Lys-Gly) (interchain with G-Cter in SUMO2); alternate. A phosphoserine mark is found at S1460, S1462, and S1474. Residues 1484–1603 (NSFVGLRVVA…NRLREQYGLG (120 aa)) form a tudor-like region. Positions 1495–1523 (WSSNGYFYSGKITRDVGAGKYKLLFDDGY) are interaction with dimethylated histone H4. Residue K1563 forms a Glycyl lysine isopeptide (Lys-Gly) (interchain with G-Cter in SUMO1); alternate linkage. A Glycyl lysine isopeptide (Lys-Gly) (interchain with G-Cter in SUMO2); alternate cross-link involves residue K1563. The UDR motif lies at 1604–1631 (PYEAVTPLTKAADISLDNLVEGKRKRRS). Position 1609 is a phosphothreonine (T1609). S1618, S1631, and S1635 each carry phosphoserine. Disordered regions lie at residues 1622–1719 (LVEG…EEQR) and 1745–1768 (LASR…FLEI). Positions 1634–1650 (SSPATPTASSSSSTTPT) are enriched in low complexity. 2 positions are modified to phosphothreonine: T1638 and T1648. S1656, S1673, and S1678 each carry phosphoserine. K1685 is covalently cross-linked (Glycyl lysine isopeptide (Lys-Gly) (interchain with G-Cter in ubiquitin)). Phosphoserine occurs at positions 1701, 1759, and 1778. 2 BRCT domains span residues 1724-1848 (LNKT…NYLL) and 1864-1964 (PREN…QHPK).

In terms of assembly, homoligomer. Interacts with p53/TP53 (via the central domain). Interacts with DCLRE1C. Interacts with histone H2AX and this requires phosphorylation of H2AX on 'Ser-139'. Interacts with histone H4 that has been dimethylated at 'Lys-20' (H4K20me2). Has low affinity for histone H4 containing monomethylated 'Lys-20' (H4K20me1). Does not bind histone H4 containing unmethylated or trimethylated 'Lys-20' (H4K20me3). Has low affinity for histone H3 that has been dimethylated on 'Lys-79'. Has very low affinity for histone H3 that has been monomethylated on 'Lys-79' (in vitro). Does not bind unmethylated histone H3. Interacts with histone H2A monoubiquitinated at 'Lys-15' (H2AK15Ub). Interacts with PWWP3A/EXPAND1. Interacts with CHEK2; modulates CHEK2 phosphorylation at 'Thr-68' in response to infrared. Interacts with MSL1; this interaction may be required for MSL1 DNA repair activity, but not for histone acetyltransferase activity. Interacts (when phosphorylated by ATM) with RIF1. Interacts (via the Tudor-like domain) with NUDT16L1/TIRR; interaction masks the Tudor-like domain and prevents recruitment to chromatin. Interacts with PAXIP1. Interacts with SHLD2. Interacts (when phosphorylated) with TOPBP1. Interacts with GFI1; promoting methylation by PRMT1. Interacts with (phosphorylated) DYNLL1; specifically binds DYNLL1 phosphorylated at 'Ser-88' and promotes its recruitment to double stand breaks (DSBs). As to quaternary structure, (Microbial infection) Interacts (via C-terminus) with Epstein-Barr virus lytic switch protein BZLF1 (via C-terminus); this interaction is involved in the activation of the viral lytic cycle. Post-translationally, asymmetrically dimethylated on Arg residues by PRMT1. Methylation is required for DNA binding. Phosphorylated at basal level in the absence of DNA damage. Phosphorylated by ATM in response to DNA damage: phosphorylation at different sites promotes interaction with different set of proteins: phosphorylation at the N-terminus by ATM (residues from 6-178) promotes interaction with PAXIP1 and non-homologous end joining (NHEJ) of dysfunctional telomeres. Phosphorylation by ATM at residues that are located more C-terminus (residues 300-650) leads to promote interaction with RIF1. Interaction with RIF1 leads to disrupt interaction with NUDT16L1/TIRR. Phosphorylation at Thr-1609 and Ser-1618 in the UDR motif blocks interaction with H2AK15ub. Dephosphorylated by PPP4C. Hyperphosphorylation during mitosis correlates with its exclusion from chromatin and DNA lesions. Hyperphosphorylated in an ATR-dependent manner in response to DNA damage induced by UV irradiation. Dephosphorylated by PPP5C. Phosphorylation at Ser-366 and Thr-670 promotes interaction with TOPBP1. Phosphorylated by VRK1. In terms of processing, monoubiquitinated at Lys-1685 by MSL2 is reponse to DNA damage, leading to its stabilization.

It is found in the nucleus. The protein localises to the chromosome. Its subcellular location is the centromere. It localises to the kinetochore. Functionally, double-strand break (DSB) repair protein involved in response to DNA damage, telomere dynamics and class-switch recombination (CSR) during antibody genesis. Plays a key role in the repair of double-strand DNA breaks (DSBs) in response to DNA damage by promoting non-homologous end joining (NHEJ)-mediated repair of DSBs and specifically counteracting the function of the homologous recombination (HR) repair protein BRCA1. In response to DSBs, phosphorylation by ATM promotes interaction with RIF1 and dissociation from NUDT16L1/TIRR, leading to recruitment to DSBs sites. Recruited to DSBs sites by recognizing and binding histone H2A monoubiquitinated at 'Lys-15' (H2AK15Ub) and histone H4 dimethylated at 'Lys-20' (H4K20me2), two histone marks that are present at DSBs sites. Required for immunoglobulin class-switch recombination (CSR) during antibody genesis, a process that involves the generation of DNA DSBs. Participates in the repair and the orientation of the broken DNA ends during CSR. In contrast, it is not required for classic NHEJ and V(D)J recombination. Promotes NHEJ of dysfunctional telomeres via interaction with PAXIP1. The chain is TP53-binding protein 1 from Homo sapiens (Human).